Reading from the N-terminus, the 99-residue chain is Nucleoid-associated protein MGAS2096_Spy1605 (99 aa).

The protein belongs to the YbaB/EbfC family. Homodimer.

It is found in the cytoplasm. It localises to the nucleoid. Functionally, binds to DNA and alters its conformation. May be involved in regulation of gene expression, nucleoid organization and DNA protection. This Streptococcus pyogenes serotype M12 (strain MGAS2096) protein is Nucleoid-associated protein MGAS2096_Spy1605.